Reading from the N-terminus, the 433-residue chain is Divergent protein kinase domain 2B (433 aa).

The N-terminal stretch at 1–31 is a signal peptide; that stretch reads MEPQLGPEAAALRPGWLALLLWVSALSCSFS. Residue N100 is glycosylated (N-linked (GlcNAc...) asparagine).

Belongs to the DIPK family.

It localises to the secreted. The chain is Divergent protein kinase domain 2B from Homo sapiens (Human).